The chain runs to 185 residues: Probable chorismate pyruvate-lyase (185 aa).

Substrate is bound by residues Arg80, Leu118, and Glu170.

Belongs to the UbiC family.

It is found in the cytoplasm. The enzyme catalyses chorismate = 4-hydroxybenzoate + pyruvate. It functions in the pathway cofactor biosynthesis; ubiquinone biosynthesis. In terms of biological role, removes the pyruvyl group from chorismate, with concomitant aromatization of the ring, to provide 4-hydroxybenzoate (4HB) for the ubiquinone pathway. The chain is Probable chorismate pyruvate-lyase from Pseudomonas putida (strain ATCC 47054 / DSM 6125 / CFBP 8728 / NCIMB 11950 / KT2440).